The primary structure comprises 164 residues: MKSVITTVISAADAAGRFPSNSDLESIQGNIQRSAARLEAAEKLAGNHEAVVKEAGDACFAKYAYLKNPGEAGENQEKINKCYRDVDHYMRLVNYDLVVGGTGPLDEWGIAGAREVYRTLNLPTSAYVASIAYTRDRLCVPRDMSAQAGVEFSAYLDYLINALS.

(2R,3E)-phycoerythrobilin is bound by residues Cys-82 and Cys-139.

This sequence belongs to the phycobiliprotein family. In terms of assembly, heteromer of 6 alpha, 6 beta and one gamma chain. In terms of processing, contains two covalently linked bilin chromophores.

The protein localises to the plastid. Its subcellular location is the chloroplast thylakoid membrane. Light-harvesting photosynthetic bile pigment-protein from the phycobiliprotein complex. The protein is B-phycoerythrin alpha chain (cpeA) of Porphyridium sordidum (Red alga).